The chain runs to 482 residues: Proline--tRNA ligase (482 aa).

Belongs to the class-II aminoacyl-tRNA synthetase family. ProS type 3 subfamily. As to quaternary structure, homodimer.

Its subcellular location is the cytoplasm. The catalysed reaction is tRNA(Pro) + L-proline + ATP = L-prolyl-tRNA(Pro) + AMP + diphosphate. Functionally, catalyzes the attachment of proline to tRNA(Pro) in a two-step reaction: proline is first activated by ATP to form Pro-AMP and then transferred to the acceptor end of tRNA(Pro). This chain is Proline--tRNA ligase, found in Natronomonas pharaonis (strain ATCC 35678 / DSM 2160 / CIP 103997 / JCM 8858 / NBRC 14720 / NCIMB 2260 / Gabara) (Halobacterium pharaonis).